A 336-amino-acid polypeptide reads, in one-letter code: Cinnamoyl-CoA reductase 2 (336 aa).

Residues 21–27, arginine 46, lysine 52, 72–73, 92–94, tyrosine 165, lysine 169, 192–195, and serine 207 each bind NADP(+); these read GAGGFIA, DL, TAS, and PVVV. Cysteines 158 and 166 form a disulfide. Residue lysine 169 is the Proton donor of the active site.

The protein belongs to the NAD(P)-dependent epimerase/dehydratase family. Dihydroflavonol-4-reductase subfamily. In terms of processing, the formation of a reversible disulfide bond reduces activity by perturbing the positioning of nearby catalytic residues. As to expression, mainly expressed in roots and stems, especially at the second internode and, to a lower extent, in leaves and flowers. Localized in vascular elements, with weaker expression in the interfascicular (xylem fiber) region.

Its subcellular location is the cytoplasm. It catalyses the reaction (E)-coniferaldehyde + NADP(+) + CoA = (E)-feruloyl-CoA + NADPH + H(+). The catalysed reaction is (E)-4-coumaraldehyde + NADP(+) + CoA = (E)-4-coumaroyl-CoA + NADPH + H(+). It carries out the reaction (E)-sinapaldehyde + NADP(+) + CoA = (E)-sinapoyl-CoA + NADPH + H(+). The enzyme catalyses (E)-cinnamaldehyde + NADP(+) + CoA = (E)-cinnamoyl-CoA + NADPH + H(+). It catalyses the reaction (E)-caffeyl aldehyde + NADP(+) + CoA = (E)-caffeoyl-CoA + NADPH + H(+). It functions in the pathway aromatic compound metabolism; phenylpropanoid biosynthesis. In terms of biological role, involved in the latter stages of lignin biosynthesis. Catalyzes one of the last steps of monolignol biosynthesis, the conversion of cinnamoyl-CoAs into their corresponding cinnamaldehydes. Mediates the conversion of caffeoyl-CoA and coumaroyl-CoA to caffaldehyde and coumaraldehyde, respectively. Also active, with a lower efficiency, toward feruloyl-CoA and sinapoyl-CoA. Involved in the production of floral volatile phenylpropanoids in flowers of fragrant cultivars from cinnamic acid, a common precursor with the anthocyanin biosynthesis pathway involved in flower pigmentation. The protein is Cinnamoyl-CoA reductase 2 of Medicago truncatula (Barrel medic).